Here is a 189-residue protein sequence, read N- to C-terminus: ComE operon protein 2 (189 aa).

Positions 5–132 (SWNQYFMAQS…PYAQELFEQA (128 aa)) constitute a CMP/dCMP-type deaminase domain. His70 is a binding site for Zn(2+). Glu72 (proton donor) is an active-site residue. Positions 98 and 101 each coordinate Zn(2+).

The protein belongs to the cytidine and deoxycytidylate deaminase family. The cofactor is Zn(2+).

Dispensable for transformability. The protein is ComE operon protein 2 (comEB) of Bacillus subtilis (strain 168).